Reading from the N-terminus, the 495-residue chain is F(420)H(2) dehydrogenase subunit M (495 aa).

The next 15 helical transmembrane spans lie at 1–21 (MLPV…VTFF), 27–47 (LAAG…LYAY), 57–77 (MQFY…SVGI), 80–100 (VSMP…LFTW), 108–128 (NRFY…FVAL), 130–150 (FVVF…IVNL), 163–183 (FFIY…GLFY), 215–235 (IFLA…FHSW), 249–269 (ILFI…LPML), 277–297 (LMIM…ALLA), 315–335 (MGYV…GAMF), 338–358 (FSHG…QTAA), 378–398 (VAMM…GFIA), 412–432 (VFVV…LWAM), and 450–470 (INSI…YFGL).

The protein belongs to the complex I subunit 4 family. As to quaternary structure, the FPO complex is composed of at least 13 different subunits. FpoA, FpoH, FpoJ, FpoK, FpoL, FpoM and FpoN proteins constitute the membrane sector of the complex.

Its subcellular location is the cell membrane. It carries out the reaction methanophenazine + reduced coenzyme F420-(gamma-L-Glu)(n) = dihydromethanophenazine + oxidized coenzyme F420-(gamma-L-Glu)(n) + H(+). Its function is as follows. Component of the F(420)H(2) dehydrogenase (FPO complex) which is part of the energy-conserving F(420)H(2):heterodisulfide oxidoreductase system. The membrane-bound electron transfer system of the complex plays an important role in the metabolism of methylotrophic methanogens when the organisms grow on methanol or methylamines. Catalyzes the oxidation of methanophenazine to dihydromethanophenazine. It shuttles electrons from F(420)H(2), via FAD and iron-sulfur (Fe-S) centers, to methanophenazine (an electron carrier in the membrane). It couples the redox reaction to proton translocation (for every two electrons transferred, two hydrogen ions are translocated across the cytoplasmic membrane), and thus conserves the redox energy in a proton gradient. It also catalyzes the oxidation of F(420)H(2) with quinones such as 2,3-dimethyl-1,4-naphthoquinone, 2-methyl-1,4-naphthoquinone and tetramethyl-p-benzoquinone. The sequence is that of F(420)H(2) dehydrogenase subunit M (fpoM) from Methanosarcina mazei (strain ATCC BAA-159 / DSM 3647 / Goe1 / Go1 / JCM 11833 / OCM 88) (Methanosarcina frisia).